The sequence spans 932 residues: Protein translocase subunit SecA (932 aa).

Residues Gln90, 108–112, and Asp498 each bind ATP; that span reads GEGKT.

It belongs to the SecA family. In terms of assembly, monomer and homodimer. Part of the essential Sec protein translocation apparatus which comprises SecA, SecYEG and auxiliary proteins SecDF. Other proteins may also be involved.

It localises to the cell inner membrane. It is found in the cellular thylakoid membrane. The protein resides in the cytoplasm. It catalyses the reaction ATP + H2O + cellular proteinSide 1 = ADP + phosphate + cellular proteinSide 2.. Part of the Sec protein translocase complex. Interacts with the SecYEG preprotein conducting channel. Has a central role in coupling the hydrolysis of ATP to the transfer of proteins into and across the cell membrane, serving as an ATP-driven molecular motor driving the stepwise translocation of polypeptide chains across the membrane. Functionally, probably participates in protein translocation into and across both the cytoplasmic and thylakoid membranes in cyanobacterial cells. This chain is Protein translocase subunit SecA, found in Synechocystis sp. (strain ATCC 27184 / PCC 6803 / Kazusa).